Consider the following 208-residue polypeptide: Small ribosomal subunit protein uS3 (208 aa).

The 70-residue stretch at 16 to 85 (IDEYFKKELS…KPQIDVKPVE (70 aa)) folds into the KH type-2 domain.

The protein belongs to the universal ribosomal protein uS3 family. In terms of assembly, part of the 30S ribosomal subunit.

In terms of biological role, binds the lower part of the 30S subunit head. The polypeptide is Small ribosomal subunit protein uS3 (Methanocaldococcus jannaschii (strain ATCC 43067 / DSM 2661 / JAL-1 / JCM 10045 / NBRC 100440) (Methanococcus jannaschii)).